Consider the following 40-residue polypeptide: Photosystem II reaction center protein J (40 aa).

The chain crosses the membrane as a helical span at residues 8-28 (IPLWLIGTVTGIIVIGLIGIF).

This sequence belongs to the PsbJ family. In terms of assembly, PSII is composed of 1 copy each of membrane proteins PsbA, PsbB, PsbC, PsbD, PsbE, PsbF, PsbH, PsbI, PsbJ, PsbK, PsbL, PsbM, PsbT, PsbX, PsbY, PsbZ, Psb30/Ycf12, at least 3 peripheral proteins of the oxygen-evolving complex and a large number of cofactors. It forms dimeric complexes.

The protein resides in the plastid. Its subcellular location is the chloroplast thylakoid membrane. Its function is as follows. One of the components of the core complex of photosystem II (PSII). PSII is a light-driven water:plastoquinone oxidoreductase that uses light energy to abstract electrons from H(2)O, generating O(2) and a proton gradient subsequently used for ATP formation. It consists of a core antenna complex that captures photons, and an electron transfer chain that converts photonic excitation into a charge separation. The protein is Photosystem II reaction center protein J of Piper cenocladum (Ant piper).